The following is a 156-amino-acid chain: MGRSISVSFGLLVVFLSLSGTGADQDCLPGWSSHEGHCYKVFNLDKTWEDAEKFCTEQGNSGHLVSIDSKKETNFVAELVSPNIKETRRTDFVWIGLRAEDKRQHCSSEWSDGSSINYQNWIEAESKKCLGLEKQTRYRKWVNLNCGKPYRFTCEI.

A signal peptide spans 1-23; that stretch reads MGRSISVSFGLLVVFLSLSGTGA. 3 disulfide bridges follow: C27-C38, C55-C154, and C129-C146. A C-type lectin domain is found at 34–155; sequence HEGHCYKVFN…CGKPYRFTCE (122 aa).

The protein belongs to the snaclec family. Heterodimer; disulfide-linked. Expressed by the venom gland.

Its subcellular location is the secreted. Its function is as follows. Interferes with one step of hemostasis (modulation of platelet aggregation, or coagulation cascade, for example). The protein is Snaclec A6 of Macrovipera lebetinus (Levantine viper).